A 270-amino-acid polypeptide reads, in one-letter code: Putative methylsterol monooxygenase DDB_G0269788 (270 aa).

The next 3 helical transmembrane spans lie at 31–51, 82–102, and 110–130; these read FIAH…CDFM, IFVQ…IGLS, and IPYL…YFYW. The Fatty acid hydroxylase domain occupies 118–249; it reads ACCFLIEDFY…FTYLDKIFGT (132 aa). Residues 132–136 carry the Histidine box-1 motif; it reads HRALH. The Histidine box-2 motif lies at 145–149; it reads HKVHH. The Histidine box-3 signature appears at 224 to 230; that stretch reads FHDFHHE.

The protein belongs to the sterol desaturase family. Requires Fe cation as cofactor.

The protein localises to the endoplasmic reticulum membrane. The catalysed reaction is 4,4-dimethyl-5alpha-cholest-7-en-3beta-ol + 6 Fe(II)-[cytochrome b5] + 3 O2 + 5 H(+) = 4alpha-carboxy-4beta-methyl-5alpha-cholest-7-ene-3beta-ol + 6 Fe(III)-[cytochrome b5] + 4 H2O. It participates in steroid biosynthesis; zymosterol biosynthesis; zymosterol from lanosterol: step 3/6. This Dictyostelium discoideum (Social amoeba) protein is Putative methylsterol monooxygenase DDB_G0269788.